A 118-amino-acid polypeptide reads, in one-letter code: Small ribosomal subunit protein uS12cz/uS12cy (118 aa).

This sequence belongs to the universal ribosomal protein uS12 family. As to quaternary structure, part of the 30S ribosomal subunit.

The protein resides in the plastid. It is found in the chloroplast. Its function is as follows. With S4 and S5 plays an important role in translational accuracy. Located at the interface of the 30S and 50S subunits. In Helianthus annuus (Common sunflower), this protein is Small ribosomal subunit protein uS12cz/uS12cy (rps12-A).